Consider the following 182-residue polypeptide: SAGA-associated factor 11 homolog (182 aa).

The disordered stretch occupies residues 61–84; that stretch reads GSGAAVEGEPEDSKPYTIVDQPDT. The SGF11-type zinc-finger motif lies at 98–119; the sequence is CHCPNCNRIVAASRFAPHLEKC. The segment at 133 to 182 is disordered; sequence RIANTRDVGTGNYFGGDEDDEDDADWSGEKRKKKISQVRTNGSKKNGKTS. A compositionally biased stretch (acidic residues) spans 148–158; it reads GDEDDEDDADW.

This sequence belongs to the SGF11 family. In terms of assembly, component of some SAGA transcription coactivator-HAT complexes. Within the SAGA complex, participates in a subcomplex of SAGA called the DUB module (deubiquitination module).

Its subcellular location is the nucleus. Its function is as follows. Component of the transcription regulatory histone acetylation (HAT) complex SAGA, a multiprotein complex that activates transcription by remodeling chromatin and mediating histone acetylation and deubiquitination. Within the SAGA complex, participates in a subcomplex that specifically deubiquitinates histone H2B. The SAGA complex is recruited to specific gene promoters by activators, where it is required for transcription. In Anopheles gambiae (African malaria mosquito), this protein is SAGA-associated factor 11 homolog.